The primary structure comprises 252 residues: Type II secretion system protein N (252 aa).

Topologically, residues 1 to 4 (MKNR) are cytoplasmic. A helical transmembrane segment spans residues 5–25 (LTIGLLLAAIYLFWLLLSAPA). Over 26 to 252 (RLLALTLSDD…QGEWLSEEKK (227 aa)) the chain is Periplasmic.

The protein belongs to the GSP N family.

Its subcellular location is the cell inner membrane. Its function is as follows. Involved in a type II secretion system (T2SS, formerly general secretion pathway, GSP) for the export of proteins. Required for the translocation of pullulanase. This is Type II secretion system protein N (pulN) from Klebsiella pneumoniae.